A 132-amino-acid chain; its full sequence is Small ribosomal subunit protein uS8 (132 aa).

Belongs to the universal ribosomal protein uS8 family. In terms of assembly, part of the 30S ribosomal subunit. Contacts proteins S5 and S12.

One of the primary rRNA binding proteins, it binds directly to 16S rRNA central domain where it helps coordinate assembly of the platform of the 30S subunit. The protein is Small ribosomal subunit protein uS8 of Rickettsia massiliae (strain Mtu5).